We begin with the raw amino-acid sequence, 480 residues long: RAC-alpha serine/threonine-protein kinase (480 aa).

A PH domain is found at 5 to 108; it reads AIVKEGWLHK…WATAIQTVAD (104 aa). Lysine 14 and lysine 20 each carry N6-acetyllysine. 14-19 is a 1D-myo-inositol 1,3,4,5-tetrakisphosphate binding site; it reads KRGEYI. Residues 23 to 25 and asparagine 53 each bind 1D-myo-inositol 1,3,4,5-tetrakisphosphate; that span reads RPR. The cysteines at positions 60 and 77 are disulfide-linked. Arginine 86 contributes to the 1D-myo-inositol 1,3,4,5-tetrakisphosphate binding site. Residues 114–137 are disordered; it reads EEETMDFRSGSPSDNSGAEEMEVS. Residue serine 124 is modified to Phosphoserine. Serine 126 and serine 129 each carry phosphoserine; alternate. Serine 126 and serine 129 each carry an O-linked (GlcNAc) serine; alternate glycan. The 259-residue stretch at 150 to 408 folds into the Protein kinase domain; the sequence is FEYLKLLGKG…AKEIMQHRFF (259 aa). 156–164 contributes to the ATP binding site; sequence LGKGTFGKV. Tyrosine 176 carries the phosphotyrosine; by TNK2 modification. Lysine 179 serves as a coordination point for ATP. Aspartate 274 acts as the Proton acceptor in catalysis. Lysine 284 participates in a covalent cross-link: Glycyl lysine isopeptide (Lys-Gly) (interchain with G-Cter in ubiquitin). The cysteines at positions 296 and 310 are disulfide-linked. An O-linked (GlcNAc) threonine glycan is attached at threonine 305. Threonine 308 is modified (phosphothreonine; by IKKE, PDPK1 and TBK1). Threonine 312 carries an O-linked (GlcNAc) threonine glycan. Residues 409–480 enclose the AGC-kinase C-terminal domain; sequence ANIVWQDVYE…QFSYSASGTA (72 aa). The residue at position 448 (threonine 448) is a Phosphothreonine. Threonine 450 carries the post-translational modification Phosphothreonine; by MTOR. The interval 450–480 is disordered; that stretch reads TPPDQDDSMECVDSERRPHFPQFSYSASGTA. O-linked (GlcNAc) serine; alternate glycosylation occurs at serine 473. Residue serine 473 is modified to Phosphoserine; by IKKE, MTOR, PRKDC and TBK1; alternate. Tyrosine 474 is subject to Phosphotyrosine. A Phosphoserine; by CDK2 and MTOR modification is found at serine 477. At threonine 479 the chain carries Phosphothreonine; by CDK2 and MTOR.

Belongs to the protein kinase superfamily. AGC Ser/Thr protein kinase family. RAC subfamily. As to quaternary structure, interacts with and phosphorylated by PDPK1. Interacts with AGAP2 (isoform 2/PIKE-A); the interaction occurs in the presence of guanine nucleotides. Interacts with AKTIP. Interacts (via PH domain) with MTCP1, TCL1A and TCL1B. Interacts with CDKN1B; the interaction phosphorylates CDKN1B promoting 14-3-3 binding and cell-cycle progression. Interacts with MAP3K5 and TRAF6. Interacts with BAD, PPP2R5B, STK3 and STK4. Interacts (via PH domain) with SIRT1. Interacts with SRPK2 in a phosphorylation-dependent manner. Interacts with TRIM13; the interaction ubiquitinates AKT1 leading to its proteasomal degradation. Interacts with RAF1. Interacts (via the C-terminus) with CCDC88A (via its C-terminus) and THEM4 (via its C-terminus). Interacts with GRB10; the interaction leads to GRB10 phosphorylation thus promoting YWHAE-binding. Interacts with KCTD20. Interacts with BTBD10. Interacts with PA2G4. Interacts with KIF14; the interaction is detected in the plasma membrane upon INS stimulation and promotes AKT1 phosphorylation. Interacts with FAM83B; activates the PI3K/AKT signaling cascade. Interacts with WDFY2 (via WD repeats 1-3). Forms a complex with WDFY2 and FOXO1. Interacts with FAM168A. Interacts with SYAP1 (via phosphorylated form and BSD domain); this interaction is enhanced in a mTORC2-mediated manner in response to epidermal growth factor (EGF) stimulation and activates AKT1. Interacts with PKHM3. Interacts with FKBP5/FKBP51; promoting interaction between Akt/AKT1 and PHLPP1, thereby enhancing dephosphorylation and subsequent activation of Akt/AKT1. Interacts with TMEM175; leading to formation of the lysoK(GF) complex. Post-translationally, O-GlcNAcylation at Thr-305 and Thr-312 inhibits activating phosphorylation at Thr-308 via disrupting the interaction between AKT1 and PDPK1. O-GlcNAcylation at Ser-473 also probably interferes with phosphorylation at this site. Phosphorylation on Thr-308, Ser-473 and Tyr-474 is required for full activity. Phosphorylation of the activation loop at Thr-308 by PDPK1/PDK1 is a prerequisite for full activation. Phosphorylation by mTORC2 in response to growth factors plays a key role in AKT1 activation: mTORC2 phosphorylates different sites depending on the context, such as Thr-450, Ser-473, Ser-477 or Thr-479, thereby facilitating subsequent phosphorylation of the activation loop by PDPK1/PDK1. Phosphorylation at Ser-473 by mTORC2 promotes ubiquitination and degradation by the proteasome. Also phosphorylated at Ser-477 and Thr-479 by CDK2, facilitating subsequent phosphorylation of the activation loop by PDPK1/PDK1. Activated TNK2 phosphorylates it on Tyr-176 resulting in its binding to the anionic plasma membrane phospholipid PA. This phosphorylated form localizes to the cell membrane, where it is targeted by PDPK1 and PDPK2 for further phosphorylations on Thr-308 and Ser-473 leading to its activation. Phosphorylated at Thr-308 and Ser-473 by IKBKE and TBK1. Ser-473 phosphorylation is enhanced by interaction with AGAP2 isoform 2 (PIKE-A). Ser-473 phosphorylation is enhanced by signaling through activated FLT3. Ser-473 is dephosphorylated by PHLPP. Dephosphorylated at Thr-308 and Ser-473 by PP2A phosphatase. The phosphorylated form of PPP2R5B is required for bridging AKT1 with PP2A phosphatase. Ser-473 is dephosphorylated by CPPED1, leading to termination of signaling. AIM2 acts as an inhibitor of AKT1 by inhibiting phosphorylation Ser-473: AIM2 acts both by inhibiting the activity of PRKDC/DNA-PK kinase and promoting dephosphorylation by PP2A phosphatase. In terms of processing, ubiquitinated; undergoes both 'Lys-48'- and 'Lys-63'-linked polyubiquitination. TRAF6-induced 'Lys-63'-linked AKT1 ubiquitination is critical for phosphorylation and activation. When ubiquitinated, it translocates to the plasma membrane, where it becomes phosphorylated. When fully phosphorylated and translocated into the nucleus, undergoes 'Lys-48'-polyubiquitination catalyzed by TTC3, leading to its degradation by the proteasome. Also ubiquitinated by TRIM13 leading to its proteasomal degradation. Ubiquitinated via 'Lys-48'-linked polyubiquitination by ZNRF1, leading to its degradation by the proteasome. Phosphorylated, undergoes 'Lys-48'-linked polyubiquitination preferentially at Lys-284 catalyzed by MUL1, leading to its proteasomal degradation. Post-translationally, acetylated on Lys-14 and Lys-20 by the histone acetyltransferases EP300 and KAT2B. Acetylation results in reduced phosphorylation and inhibition of activity. Deacetylated at Lys-14 and Lys-20 by SIRT1. SIRT1-mediated deacetylation relieves the inhibition. Cleavage by caspase-3/CASP3. Cleaved at the caspase-3 consensus site Asp-462 during apoptosis, resulting in down-regulation of the AKT signaling pathway and decreased cell survival. Widely expressed. Low levels found in liver with slightly higher levels present in thymus and testis.

It localises to the cytoplasm. The protein resides in the nucleus. The protein localises to the cell membrane. Its subcellular location is the mitochondrion intermembrane space. The catalysed reaction is L-seryl-[protein] + ATP = O-phospho-L-seryl-[protein] + ADP + H(+). The enzyme catalyses L-threonyl-[protein] + ATP = O-phospho-L-threonyl-[protein] + ADP + H(+). Three specific sites, one in the kinase domain (Thr-308) and the two other ones in the C-terminal regulatory region (Ser-473 and Tyr-474), need to be phosphorylated for its full activation. In terms of biological role, AKT1 is one of 3 closely related serine/threonine-protein kinases (AKT1, AKT2 and AKT3) called the AKT kinase, and which regulate many processes including metabolism, proliferation, cell survival, growth and angiogenesis. This is mediated through serine and/or threonine phosphorylation of a range of downstream substrates. Over 100 substrate candidates have been reported so far, but for most of them, no isoform specificity has been reported. AKT is responsible of the regulation of glucose uptake by mediating insulin-induced translocation of the SLC2A4/GLUT4 glucose transporter to the cell surface. Phosphorylation of PTPN1 at 'Ser-50' negatively modulates its phosphatase activity preventing dephosphorylation of the insulin receptor and the attenuation of insulin signaling. Phosphorylation of TBC1D4 triggers the binding of this effector to inhibitory 14-3-3 proteins, which is required for insulin-stimulated glucose transport. AKT also regulates the storage of glucose in the form of glycogen by phosphorylating GSK3A at 'Ser-21' and GSK3B at 'Ser-9', resulting in inhibition of its kinase activity. Phosphorylation of GSK3 isoforms by AKT is also thought to be one mechanism by which cell proliferation is driven. AKT also regulates cell survival via the phosphorylation of MAP3K5 (apoptosis signal-related kinase). Phosphorylation of 'Ser-83' decreases MAP3K5 kinase activity stimulated by oxidative stress and thereby prevents apoptosis. AKT mediates insulin-stimulated protein synthesis by phosphorylating TSC2 at 'Ser-939' and 'Thr-1462', thereby activating the mTORC1 signaling pathway, and leading to both phosphorylation of 4E-BP1 and in activation of RPS6KB1. Also regulates the mTORC1 signaling pathway by catalyzing phosphorylation of CASTOR1 and DEPDC5. AKT plays a role as key modulator of the AKT-mTOR signaling pathway controlling the tempo of the process of newborn neurons integration during adult neurogenesis, including correct neuron positioning, dendritic development and synapse formation. Part of a positive feedback loop of mTORC2 signaling by mediating phosphorylation of MAPKAP1/SIN1, promoting mTORC2 activation. AKT is involved in the phosphorylation of members of the FOXO factors (Forkhead family of transcription factors), leading to binding of 14-3-3 proteins and cytoplasmic localization. In particular, FOXO1 is phosphorylated at 'Thr-24', 'Ser-256' and 'Ser-319'. FOXO3 and FOXO4 are phosphorylated on equivalent sites. AKT has an important role in the regulation of NF-kappa-B-dependent gene transcription and positively regulates the activity of CREB1 (cyclic AMP (cAMP)-response element binding protein). The phosphorylation of CREB1 induces the binding of accessory proteins that are necessary for the transcription of pro-survival genes such as BCL2 and MCL1. AKT phosphorylates 'Ser-454' on ATP citrate lyase (ACLY), thereby potentially regulating ACLY activity and fatty acid synthesis. Activates the 3B isoform of cyclic nucleotide phosphodiesterase (PDE3B) via phosphorylation of 'Ser-273', resulting in reduced cyclic AMP levels and inhibition of lipolysis. Phosphorylates PIKFYVE on 'Ser-318', which results in increased PI(3)P-5 activity. The Rho GTPase-activating protein DLC1 is another substrate and its phosphorylation is implicated in the regulation cell proliferation and cell growth. Signals downstream of phosphatidylinositol 3-kinase (PI(3)K) to mediate the effects of various growth factors such as platelet-derived growth factor (PDGF), epidermal growth factor (EGF), insulin and insulin-like growth factor 1 (IGF1). AKT mediates the antiapoptotic effects of IGF1. Essential for the SPATA13-mediated regulation of cell migration and adhesion assembly and disassembly. May be involved in the regulation of the placental development. Phosphorylates STK4/MST1 at 'Thr-120' and 'Thr-387' leading to inhibition of its: kinase activity, nuclear translocation, autophosphorylation and ability to phosphorylate FOXO3. Phosphorylates STK3/MST2 at 'Thr-117' and 'Thr-384' leading to inhibition of its: cleavage, kinase activity, autophosphorylation at Thr-180, binding to RASSF1 and nuclear translocation. Phosphorylates SRPK2 and enhances its kinase activity towards SRSF2 and ACIN1 and promotes its nuclear translocation. Phosphorylates RAF1 at 'Ser-259' and negatively regulates its activity. Phosphorylation of BAD stimulates its pro-apoptotic activity. Phosphorylates KAT6A at 'Thr-369' and this phosphorylation inhibits the interaction of KAT6A with PML and negatively regulates its acetylation activity towards p53/TP53. Phosphorylates palladin (PALLD), modulating cytoskeletal organization and cell motility. Phosphorylates prohibitin (PHB), playing an important role in cell metabolism and proliferation. Phosphorylates CDKN1A, for which phosphorylation at 'Thr-145' induces its release from CDK2 and cytoplasmic relocalization. These recent findings indicate that the AKT1 isoform has a more specific role in cell motility and proliferation. Phosphorylates CLK2 thereby controlling cell survival to ionizing radiation. Phosphorylates PCK1 at 'Ser-90', reducing the binding affinity of PCK1 to oxaloacetate and changing PCK1 into an atypical protein kinase activity using GTP as donor. Also acts as an activator of TMEM175 potassium channel activity in response to growth factors: forms the lysoK(GF) complex together with TMEM175 and acts by promoting TMEM175 channel activation, independently of its protein kinase activity. Acts as a negative regulator of the cGAS-STING pathway by mediating phosphorylation of CGAS during mitosis, leading to its inhibition. Acts as a regulator of mitochondrial calcium uptake by mediating phosphorylation of MICU1 in the mitochondrial intermembrane space, impairing MICU1 maturation. Acts as an inhibitor of tRNA methylation by mediating phosphorylation of the N-terminus of METTL1, thereby inhibiting METTL1 methyltransferase activity. In response to LPAR1 receptor pathway activation, phosphorylates Rabin8/RAB3IP which alters its activity and phosphorylates WDR44 which induces WDR44 binding to Rab11, thereby switching Rab11 vesicular function from preciliary trafficking to endocytic recycling. The chain is RAC-alpha serine/threonine-protein kinase (Akt1) from Mus musculus (Mouse).